The following is a 67-amino-acid chain: Small ribosomal subunit protein bS21 (67 aa).

The span at 37-52 (EKPSERKAREAAEAVR) shows a compositional bias: basic and acidic residues. Residues 37-67 (EKPSERKAREAAEAVRRARKMERKRLEREGF) are disordered.

The protein belongs to the bacterial ribosomal protein bS21 family.

The sequence is that of Small ribosomal subunit protein bS21 from Gluconacetobacter diazotrophicus (strain ATCC 49037 / DSM 5601 / CCUG 37298 / CIP 103539 / LMG 7603 / PAl5).